Reading from the N-terminus, the 292-residue chain is 11-beta-hydroxysteroid dehydrogenase 1 (292 aa).

The Cytoplasmic portion of the chain corresponds to 2 to 7 (AFMKKY). Residues 8–24 (LLPLLGLFLAYYYYSAN) form a helical; Signal-anchor for type II membrane protein membrane-spanning segment. Residues 25 to 292 (EEFRPEMLQG…KFDISKLVNN (268 aa)) are Lumenal-facing. NADP(+)-binding positions include 41-67 (GASK…TARS), 92-93 (TM), and 119-121 (NHI). 2 N-linked (GlcNAc...) asparagine glycosylation sites follow: N123 and N162. Residue S170 coordinates substrate. Residue Y183 is the Proton acceptor of the active site. NADP(+) is bound at residue 183–187 (YSASK). N-linked (GlcNAc...) asparagine glycosylation is present at N207. Residue 218–222 (IDTDT) participates in NADP(+) binding.

The protein belongs to the short-chain dehydrogenases/reductases (SDR) family. As to quaternary structure, homodimer. Glycosylated. Expressed in the eye.

Its subcellular location is the endoplasmic reticulum membrane. The protein resides in the microsome membrane. The enzyme catalyses an 11beta-hydroxysteroid + NADP(+) = an 11-oxosteroid + NADPH + H(+). The catalysed reaction is corticosterone + NADP(+) = 11-dehydrocorticosterone + NADPH + H(+). It carries out the reaction cortisone + NADPH + H(+) = cortisol + NADP(+). It catalyses the reaction a 7beta-hydroxysteroid + NADP(+) = a 7-oxosteroid + NADPH + H(+). The enzyme catalyses 7-oxocholesterol + NADPH + H(+) = 7beta-hydroxycholesterol + NADP(+). The catalysed reaction is chenodeoxycholate + NADP(+) = 7-oxolithocholate + NADPH + H(+). It carries out the reaction 7-oxolithocholate + NADPH + H(+) = ursodeoxycholate + NADP(+). It catalyses the reaction glycochenodeoxycholate + NADP(+) = 7-oxoglycolithocholate + NADPH + H(+). The enzyme catalyses taurochenodeoxycholate + NADP(+) = 7-oxotaurolithocholate + NADPH + H(+). The catalysed reaction is tauroursodeoxycholate + NADP(+) = 7-oxotaurolithocholate + NADPH + H(+). It carries out the reaction glycoursodeoxycholate + NADP(+) = 7-oxoglycolithocholate + NADPH + H(+). It catalyses the reaction 7-oxopregnenolone + NADPH + H(+) = 7beta-hydroxypregnenolone + NADP(+). The enzyme catalyses 3beta,7alpha-dihydroxyandrost-5-en-17-one + NADP(+) = 3beta-hydroxy-5-androstene-7,17-dione + NADPH + H(+). The catalysed reaction is 3beta-hydroxy-5-androstene-7,17-dione + NADPH + H(+) = 3beta,7beta-dihydroxyandrost-5-en-17-one + NADP(+). It carries out the reaction 3beta-hydroxy-5alpha-androstane-7,17-dione + NADPH + H(+) = 3beta,7beta-dihydroxy-5alpha-androstan-17-one + NADP(+). It participates in steroid metabolism. Its function is as follows. Controls the reversible conversion of biologically active glucocorticoids such as cortisone to cortisol, and 11-dehydrocorticosterone to corticosterone in the presence of NADP(H). Participates in the corticosteroid receptor-mediated anti-inflammatory response, as well as metabolic and homeostatic processes. Plays a role in the secretion of aqueous humor in the eye, maintaining a normotensive, intraocular environment. Bidirectional in vitro, predominantly functions as a reductase in vivo, thereby increasing the concentration of active glucocorticoids. It has broad substrate specificity, besides glucocorticoids, it accepts other steroid and sterol substrates. It has broad substrate specificity, besides glucocorticoids, it accepts other steroid and sterol substrates. Interconverts 7-oxo- and 7-hydroxy-neurosteroids such as 7-oxopregnenolone and 7beta-hydroxypregnenolone, 7-oxodehydroepiandrosterone (3beta-hydroxy-5-androstene-7,17-dione) and 7beta-hydroxydehydroepiandrosterone (3beta,7beta-dihydroxyandrost-5-en-17-one), among others. Catalyzes the stereo-specific conversion of the major dietary oxysterol, 7-ketocholesterol (7-oxocholesterol), into the more polar 7-beta-hydroxycholesterol metabolite. 7-oxocholesterol is one of the most important oxysterols, it participates in several events such as induction of apoptosis, accumulation in atherosclerotic lesions, lipid peroxidation, and induction of foam cell formation. Mediates the 7-oxo reduction of 7-oxolithocholate mainly to chenodeoxycholate, and to a lesser extent to ursodeoxycholate, both in its free form and when conjugated to glycine or taurine, providing a link between glucocorticoid activation and bile acid metabolism. Catalyzes the synthesis of 7-beta-25-dihydroxycholesterol from 7-oxo-25-hydroxycholesterol in vitro, which acts as a ligand for the G-protein-coupled receptor (GPCR) Epstein-Barr virus-induced gene 2 (EBI2) and may thereby regulate immune cell migration. The chain is 11-beta-hydroxysteroid dehydrogenase 1 from Oryctolagus cuniculus (Rabbit).